Here is a 98-residue protein sequence, read N- to C-terminus: Lipolysis-activating peptide 1-beta chain (98 aa).

The signal sequence occupies residues 1–22; the sequence is MANVQVIFVAYIAVIAFSMVYG. An LCN-type CS-alpha/beta domain is found at 23 to 91; that stretch reads DDYKPFGEHN…FLKAMEKQCP (69 aa). Cystine bridges form between C37–C60, C45–C70, and C49–C72.

This sequence belongs to the long (3 C-C) scorpion toxin superfamily. In terms of assembly, homodimer; disulfide-linked or monomer (edited version) or heterodimer of an alpha chain (AC B8XH01) and this beta chain (non-edited version). Expressed by the venom gland.

It localises to the secreted. Its function is as follows. The homodimer inhibits HMG-CoA reductase (HMGCR) (32% of inhibition produced by 0.6 uM), a glycoprotein involved in the control of cholesterol biosynthesis. The inhibitory effects of bumarsin are seen at much lower concentrations (0.6 uM) than that for statins such as atorvastatin (5 mM) and simvastatin (10 uM). In addition to inhibition of HMG-CoA reductase, this protein lowers cholesterol levels by inducing steroid hormone synthesis via StAR, and by increasing reverse cholesterol transport mediated by the induction of ABCA1 and APOA1. In terms of biological role, the heterodimer non-edited LVP1 induces lipolysis in rat adipocytes. Induction of lipolysis by LVP1 appears to be mediated through the beta-2 adrenergic receptor pathway (ADRB2). Functionally, the monomer edited version, similar to alpha-toxins, may modulate voltage-gated sodium channels (Nav) and may block voltage-gated potassium channels (Kv). The polypeptide is Lipolysis-activating peptide 1-beta chain (Buthus israelis (Israeli scorpion)).